Here is a 305-residue protein sequence, read N- to C-terminus: UDP-3-O-acyl-N-acetylglucosamine deacetylase (305 aa).

Zn(2+) is bound by residues His79, His238, and Asp242. His265 (proton donor) is an active-site residue.

Belongs to the LpxC family. Zn(2+) serves as cofactor.

It carries out the reaction a UDP-3-O-[(3R)-3-hydroxyacyl]-N-acetyl-alpha-D-glucosamine + H2O = a UDP-3-O-[(3R)-3-hydroxyacyl]-alpha-D-glucosamine + acetate. The protein operates within glycolipid biosynthesis; lipid IV(A) biosynthesis; lipid IV(A) from (3R)-3-hydroxytetradecanoyl-[acyl-carrier-protein] and UDP-N-acetyl-alpha-D-glucosamine: step 2/6. In terms of biological role, catalyzes the hydrolysis of UDP-3-O-myristoyl-N-acetylglucosamine to form UDP-3-O-myristoylglucosamine and acetate, the committed step in lipid A biosynthesis. In Shigella boydii serotype 18 (strain CDC 3083-94 / BS512), this protein is UDP-3-O-acyl-N-acetylglucosamine deacetylase.